A 703-amino-acid polypeptide reads, in one-letter code: WPP domain-interacting tail-anchored protein 1 (703 aa).

The segment covering 1–12 has biased composition (basic and acidic residues); the sequence is METETEHDRTVS. Disordered regions lie at residues 1-27 and 86-107; these read METE…SSTK and FVSK…DDDS. The segment covering 92–107 has biased composition (acidic residues); it reads EDEEEPSSNVDDDDDS. Residues 118-183 adopt a coiled-coil conformation; the sequence is SSILNSEVKE…MEQVVEMKKQ (66 aa). The disordered stretch occupies residues 189 to 208; sequence RLSSGLDEQGSWSGGQTSVS. Polar residues predominate over residues 198–208; sequence GSWSGGQTSVS. 3 coiled-coil regions span residues 236 to 265, 318 to 461, and 500 to 604; these read LEKS…MKLY, KRED…RDKG, and STVS…SREN. A helical transmembrane segment spans residues 679–699; the sequence is FKHILVAILVILISSIAYVIS.

As to quaternary structure, homodimer. Component of Ran complexes at least composed of WIT1 or WIT2, RANGAP1 or RANGAP2, and WIP1 or WIP2 or WIP3. Interacts with WIP2, WPP1/MAF1, WPP2/MAF2, RANGAP1 and RANGAP2. Component of a ternary complex composed of WPP1, HSP70-1 and WIT1. Interacts with KAKU1. Interacts with WIP1. In terms of tissue distribution, ubiquitous.

The protein resides in the nucleus envelope. The protein localises to the nucleus membrane. In terms of biological role, together with WIT2, required for the nuclear envelope docking of RANGAP proteins in root tips. The polypeptide is WPP domain-interacting tail-anchored protein 1 (WIT1) (Arabidopsis thaliana (Mouse-ear cress)).